Reading from the N-terminus, the 177-residue chain is MYKNPYGLEIYLIKGDITEIEADAIVNAANSYLQHGGGVAYAIVRKGGYIIQKESDEYVKKFGPVPVGEVAVTSAGKLKAKYVIHAVGPRYGIEGEDKLESAIFKSLLKADELSLSSIAMPAISTGIYGYPFEICARIMANVLKGYKPKTLRKVMICLYTKDAYDVFKSIFNSILKN.

Residues Met1–Leu175 form the Macro domain.

This is an uncharacterized protein from Saccharolobus solfataricus (strain ATCC 35092 / DSM 1617 / JCM 11322 / P2) (Sulfolobus solfataricus).